The sequence spans 297 residues: Protoheme IX farnesyltransferase (297 aa).

A run of 9 helical transmembrane segments spans residues 12–32, 36–56, 85–105, 108–128, 133–153, 163–183, 209–229, 230–250, and 266–286; these read PGII…AAKG, YALF…GCVF, VSLV…YLAA, LAMW…SLYM, VYGT…GYCA, LILL…IAIF, ITLY…SGYA, GYKY…MALQ, and FIFS…DFMV.

This sequence belongs to the UbiA prenyltransferase family. Protoheme IX farnesyltransferase subfamily.

It is found in the cell inner membrane. The enzyme catalyses heme b + (2E,6E)-farnesyl diphosphate + H2O = Fe(II)-heme o + diphosphate. It functions in the pathway porphyrin-containing compound metabolism; heme O biosynthesis; heme O from protoheme: step 1/1. In terms of biological role, converts heme B (protoheme IX) to heme O by substitution of the vinyl group on carbon 2 of heme B porphyrin ring with a hydroxyethyl farnesyl side group. The sequence is that of Protoheme IX farnesyltransferase from Sodalis glossinidius (strain morsitans).